The chain runs to 310 residues: Polyprenyl transferase ntnF (310 aa).

A run of 8 helical transmembrane segments spans residues 30 to 50 (HTPEGLSTASIGWLALFFYAI), 63 to 83 (FLGIFACYQITHGVFCMWNDI), 110 to 130 (AMVAFIIGLALSLGVTYAMLG), 154 to 174 (IWAPQAVLGLTMAACVLPPWV), 185 to 205 (LPASLFGAIFSWLVYLDLIYA), 230 to 250 (ACLTVLGALQIAFFAVAAFEA), 255 to 275 (FLWVFGIAVWAISVPWSILSL), and 286 to 306 (IFLVNAILGIYLAAVSGTDVW).

This sequence belongs to the UbiA prenyltransferase family. Mg(2+) is required as a cofactor.

It is found in the membrane. The protein operates within secondary metabolite biosynthesis; terpenoid biosynthesis. In terms of biological role, olyprenyl transferase; part of the gene cluster that mediates the biosynthesis of the meroterpenoids nectripenoids A and B, as well as cochliquninone D and isocochliquninone E. The pathway probably begins with the HR-PKS ntnH that catalyzes two chain-extension steps to form a reduced triketide, which then primes the SAT domain in the NR-PKS ntnG to initiate three more cycles of extension to give a linear hexaketide corresponding to the polyketide part of nectripenoids. The FAD-dependent monooxygenase ntnJ then performs an oxidative decarboxylation at C11 of the ntnH/ntnG product, via an electrophilic aromatic hydroxylation with concomitant ipso-decarboxylation. The membrane-bound polyprenyl transferase ntnF then introduces a farnesyl group before the FAD-dependent monooxygenase ntnK functions as the first epoxidase on terminal C12'-C13' olefin, followed by a second epoxidation on C7'-C8' catalyzed by ntnA. The terpene cyclase/mutase ntnI then initiates the sequential tricyclic ring formation through protonation of the terminal epoxide and catalyzes the regioselective and stereoselective 6/6/6-tricyclic ring formation. The cytochrome P450 monooxygenase ntnM may then hydroxylate C1'. The sequence is that of Polyprenyl transferase ntnF from Nectria sp.